The sequence spans 259 residues: Adenosylcobinamide-GDP ribazoletransferase (259 aa).

The next 6 membrane-spanning stretches (helical) occupy residues 37 to 57 (ASRYFGLVGTLIGVLSALVYS), 58 to 78 (VMLHWVSPSIAIIFAMIASVL), 118 to 138 (ALALVLCLLLKWQLLSELALF), 143 to 163 (VSLALILGHTLSRVVAASFIF), 195 to 215 (AAISLLLISFMQALVLILGLL), and 237 to 257 (LGATQQIAEVVCYLLLLIVGA).

Belongs to the CobS family. Requires Mg(2+) as cofactor.

The protein localises to the cell inner membrane. The catalysed reaction is alpha-ribazole + adenosylcob(III)inamide-GDP = adenosylcob(III)alamin + GMP + H(+). It catalyses the reaction alpha-ribazole 5'-phosphate + adenosylcob(III)inamide-GDP = adenosylcob(III)alamin 5'-phosphate + GMP + H(+). It participates in cofactor biosynthesis; adenosylcobalamin biosynthesis; adenosylcobalamin from cob(II)yrinate a,c-diamide: step 7/7. Its function is as follows. Joins adenosylcobinamide-GDP and alpha-ribazole to generate adenosylcobalamin (Ado-cobalamin). Also synthesizes adenosylcobalamin 5'-phosphate from adenosylcobinamide-GDP and alpha-ribazole 5'-phosphate. The polypeptide is Adenosylcobinamide-GDP ribazoletransferase (Shewanella piezotolerans (strain WP3 / JCM 13877)).